The chain runs to 359 residues: Fructose-bisphosphate aldolase 1 (359 aa).

Ser50 is a binding site for D-glyceraldehyde 3-phosphate. Asp83 functions as the Proton donor in the catalytic mechanism. Zn(2+)-binding residues include His84, Asp105, Glu142, and His198. A dihydroxyacetone phosphate-binding site is contributed by Gly199. Zn(2+) is bound at residue His232. Residues 233-235 (GSS) and 275-278 (NIDT) contribute to the dihydroxyacetone phosphate site.

This sequence belongs to the class II fructose-bisphosphate aldolase family. As to quaternary structure, homodimer. It depends on Zn(2+) as a cofactor.

It catalyses the reaction beta-D-fructose 1,6-bisphosphate = D-glyceraldehyde 3-phosphate + dihydroxyacetone phosphate. It functions in the pathway carbohydrate biosynthesis; Calvin cycle. The protein operates within carbohydrate degradation; glycolysis; D-glyceraldehyde 3-phosphate and glycerone phosphate from D-glucose: step 4/4. In terms of biological role, catalyzes the aldol condensation of dihydroxyacetone phosphate (DHAP or glycerone-phosphate) with glyceraldehyde 3-phosphate (G3P) to form fructose 1,6-bisphosphate (FBP) in gluconeogenesis and the reverse reaction in glycolysis. In Cereibacter sphaeroides (Rhodobacter sphaeroides), this protein is Fructose-bisphosphate aldolase 1 (cfxA).